We begin with the raw amino-acid sequence, 314 residues long: MLVSGRRRLLTVLLQAQKWPFQPSRDMRLVQFRAPHLVGPHLGLETGNGGGVINLNAFDPTLPKTMTQFLEQGEATLSVARRALAAQLPVLPRSEVTFLAPVTRPDKVVCVGMNYVDHCKEQNVPVPKEPIIFSKFASSIVGPYDEVVLPPQSQEVDWEVELAVVIGKKGKHIKATDAMAHVAGFTVAHDVSARDWQMRRNGKQWLLGKTFDTFCPLGPALVTKDSVADPHNLKICCRVNGEVVQSGNTNQMVFKTEDLIAWVSQFVTFYPGDVILTGTPPGVGVFRKPPVFLKKGDEVQCEIEELGVIINKVV.

Residues 1–84 (MLVSGRRRLL…ATLSVARRAL (84 aa)) constitute a mitochondrion transit peptide. 3 residues coordinate Mg(2+): Glu159, Glu161, and Asp190.

The protein belongs to the FAH family. Mg(2+) is required as a cofactor. It depends on Mn(2+) as a cofactor.

It is found in the mitochondrion. It carries out the reaction oxaloacetate = enol-oxaloacetate. Functionally, tautomerase that converts enol-oxaloacetate, a strong inhibitor of succinate dehydrogenase, to the physiological keto form of oxaloacetate. It is thereby required to maximize aerobic respiration efficiency by preventing succinate dehydrogenase inhibition. The polypeptide is Oxaloacetate tautomerase FAHD2A, mitochondrial (Homo sapiens (Human)).